The sequence spans 598 residues: Urease subunit alpha (598 aa).

Ni(2+)-binding residues include histidine 141, histidine 143, and lysine 223. N6-carboxylysine is present on lysine 223. Residue histidine 225 participates in substrate binding. Ni(2+) contacts are provided by histidine 252 and histidine 278. The active-site Proton donor is histidine 326. Aspartate 366 serves as a coordination point for Ni(2+).

This sequence belongs to the metallo-dependent hydrolases superfamily. Urease alpha subunit family. Heterotrimer of UreA (gamma), UreB (beta) and UreC (alpha) subunits. Three heterotrimers associate to form the active enzyme. Ni cation is required as a cofactor. In terms of processing, carboxylation allows a single lysine to coordinate two nickel ions.

It is found in the cytoplasm. It catalyses the reaction urea + 2 H2O + H(+) = hydrogencarbonate + 2 NH4(+). The protein operates within nitrogen metabolism; urea degradation; CO(2) and NH(3) from urea (urease route): step 1/1. The sequence is that of Urease subunit alpha from Ureaplasma parvum serovar 3 (strain ATCC 27815 / 27 / NCTC 11736).